The following is a 91-amino-acid chain: Small ribosomal subunit protein uS15 (91 aa).

It belongs to the universal ribosomal protein uS15 family. Part of the 30S ribosomal subunit. Forms a bridge to the 50S subunit in the 70S ribosome, contacting the 23S rRNA.

One of the primary rRNA binding proteins, it binds directly to 16S rRNA where it helps nucleate assembly of the platform of the 30S subunit by binding and bridging several RNA helices of the 16S rRNA. Functionally, forms an intersubunit bridge (bridge B4) with the 23S rRNA of the 50S subunit in the ribosome. The protein is Small ribosomal subunit protein uS15 of Legionella pneumophila (strain Corby).